The chain runs to 446 residues: Chromogranin-A (446 aa).

An N-terminal signal peptide occupies residues 1-16 (SAAALALLLCAGQVIA). Cys-33 and Cys-54 are disulfide-bonded. Residues 85-426 (AKERSHQQKK…RPEDQELESL (342 aa)) form a disordered region. A Phosphoserine modification is found at Ser-97. Residues 105 to 138 (VLEKQNDQAELKEGTEEASSKEAAEKRGDSKEVE) are compositionally biased toward basic and acidic residues. A compositionally biased stretch (acidic residues) spans 160–171 (EAEDQTPGEEEA). Residue Ser-209 is modified to Phosphoserine. Over residues 226 to 243 (AGEKAVPEEEGPRSEAFD) the composition is skewed to basic and acidic residues. A Phosphoserine modification is found at Ser-286. Gly-304 carries the post-translational modification Glycine amide. Ser-319 bears the Phosphoserine mark. Residues 319–346 (SEEWENAKRWSKMDRLAKELTAEKRLQG) show a composition bias toward basic and acidic residues. Acidic residues predominate over residues 347–357 (EEEEEEEEEDP). At Ser-360 the chain carries Phosphoserine. Met-361 carries the methionine sulfoxide modification. Phosphoserine is present on residues Ser-387, Ser-391, Ser-413, and Ser-427. The segment covering 403–420 (YLEEKKEEEGSANRRPED) has biased composition (basic and acidic residues). Residue Ser-413 is glycosylated (O-linked (Xyl...) (chondroitin sulfate) serine).

The protein belongs to the chromogranin/secretogranin protein family. In terms of assembly, self-interacts; self-assembly is promoted in vitro by chondroitin sulfate attachment which occurs at mildly acidic pH conditions. Interacts with SCG3. Interacts with ITPR1 in the secretory granules. Post-translationally, O-glycosylated; contains chondroitin sulfate (CS). CS attachment is pH-dependent, being observed at mildly acidic conditions of pH 5 but not at neutral pH, and promotes self-assembly in vitro. Parathyroid CHGA is sulfated on tyrosine residues, whereas adrenal CHGA seems to be mainly sulfated on oligosaccharide residues.

It is found in the secreted. Its subcellular location is the cytoplasmic vesicle. The protein resides in the secretory vesicle. It localises to the neuronal dense core vesicle. Functionally, strongly inhibits glucose induced insulin release from the pancreas. Inhibits low calcium-stimulated parathyroid cell secretion. In terms of biological role, inhibits catecholamine release from chromaffin cells and noradrenergic neurons by acting as a non-competitive nicotinic cholinergic antagonist. Can induce mast cell migration, degranulation and production of cytokines and chemokines. Its function is as follows. Regulates granule biogenesis in endocrine cells by up-regulating the transcription of protease nexin 1 (SERPINE2) via a cAMP-PKA-SP1 pathway. This leads to inhibition of granule protein degradation in the Golgi complex which in turn promotes granule formation. The polypeptide is Chromogranin-A (CHGA) (Sus scrofa (Pig)).